Reading from the N-terminus, the 397-residue chain is Mannonate dehydratase (397 aa).

The protein belongs to the mannonate dehydratase family. It depends on Fe(2+) as a cofactor. Requires Mn(2+) as cofactor.

The catalysed reaction is D-mannonate = 2-dehydro-3-deoxy-D-gluconate + H2O. The protein operates within carbohydrate metabolism; pentose and glucuronate interconversion. Catalyzes the dehydration of D-mannonate. In Yersinia pestis bv. Antiqua (strain Angola), this protein is Mannonate dehydratase.